A 374-amino-acid chain; its full sequence is Chaperone protein DnaJ (374 aa).

One can recognise a J domain in the interval 5–70 (DYYEILEIER…GKRQLYDRYG (66 aa)). The CR-type zinc-finger motif lies at 136 to 213 (GCKKEIKIRY…CNGKGHENKE (78 aa)). Residues Cys149, Cys152, Cys165, Cys168, Cys187, Cys190, Cys201, and Cys204 each contribute to the Zn(2+) site. CXXCXGXG motif repeat units lie at residues 149 to 156 (CPDCKGTG), 165 to 172 (CPDCGGRG), 187 to 194 (CPKCGGSG), and 201 to 208 (CPKCNGKG).

This sequence belongs to the DnaJ family. As to quaternary structure, homodimer. Requires Zn(2+) as cofactor.

It is found in the cytoplasm. Its function is as follows. Participates actively in the response to hyperosmotic and heat shock by preventing the aggregation of stress-denatured proteins and by disaggregating proteins, also in an autonomous, DnaK-independent fashion. Unfolded proteins bind initially to DnaJ; upon interaction with the DnaJ-bound protein, DnaK hydrolyzes its bound ATP, resulting in the formation of a stable complex. GrpE releases ADP from DnaK; ATP binding to DnaK triggers the release of the substrate protein, thus completing the reaction cycle. Several rounds of ATP-dependent interactions between DnaJ, DnaK and GrpE are required for fully efficient folding. Also involved, together with DnaK and GrpE, in the DNA replication of plasmids through activation of initiation proteins. The polypeptide is Chaperone protein DnaJ (Wolinella succinogenes (strain ATCC 29543 / DSM 1740 / CCUG 13145 / JCM 31913 / LMG 7466 / NCTC 11488 / FDC 602W) (Vibrio succinogenes)).